Reading from the N-terminus, the 261-residue chain is Transmembrane and immunoglobulin domain-containing protein 1 (261 aa).

The first 27 residues, 1-27, serve as a signal peptide directing secretion; the sequence is MAQKTSGLIQRCRFLLLMILFLPHVMT. The Ig-like C2-type 1 domain occupies 28–114; that stretch reads SSVLSVNGKT…LQRNQSVSIS (87 aa). Residues 28-219 lie on the Extracellular side of the membrane; sequence SSVLSVNGKT…IVKDKGSTVP (192 aa). Cys54 and Cys103 are disulfide-bonded. N-linked (GlcNAc...) asparagine glycosylation is found at Asn83, Asn108, Asn118, and Asn189. The Ig-like C2-type 2 domain maps to 122–208; the sequence is PPLLSGNDFQ…LIETKTKDFH (87 aa). A disulfide bridge links Cys143 with Cys194. A helical transmembrane segment spans residues 220 to 240; the sequence is IEPIIAACVVVFLTLVFGVIA. Residues 241 to 261 are Cytoplasmic-facing; the sequence is RRKRIMKLCRKDQGPQCRTAL.

Homodimer. N-glycosylated.

The protein resides in the cell membrane. The protein localises to the cytoplasm. Its function is as follows. May control cell-cell adhesion, cell migration and proliferation, cell morphology, and protects renal epithelial cells from oxidative cell injury to promote cell survival. This is Transmembrane and immunoglobulin domain-containing protein 1 from Bos taurus (Bovine).